Here is a 178-residue protein sequence, read N- to C-terminus: RNA pyrophosphohydrolase (178 aa).

The region spanning 18 to 171 (PYRPCVGLMV…KRKVYEQVVA (154 aa)) is the Nudix hydrolase domain. Residues 59 to 80 (GGIDKGEDPAQAALRELYEETG) carry the Nudix box motif.

It belongs to the Nudix hydrolase family. RppH subfamily. A divalent metal cation serves as cofactor.

Its function is as follows. Accelerates the degradation of transcripts by removing pyrophosphate from the 5'-end of triphosphorylated RNA, leading to a more labile monophosphorylated state that can stimulate subsequent ribonuclease cleavage. The protein is RNA pyrophosphohydrolase of Brucella abortus (strain 2308).